We begin with the raw amino-acid sequence, 532 residues long: 2,3-bisphosphoglycerate-independent phosphoglycerate mutase (532 aa).

Residues D13 and S63 each coordinate Mn(2+). S63 serves as the catalytic Phosphoserine intermediate. Substrate contacts are provided by residues H124, 154–155 (RD), R187, R193, 262–265 (RPDR), and K343. 5 residues coordinate Mn(2+): D421, H425, D463, H464, and H481.

Belongs to the BPG-independent phosphoglycerate mutase family. As to quaternary structure, monomer. The cofactor is Mn(2+).

It carries out the reaction (2R)-2-phosphoglycerate = (2R)-3-phosphoglycerate. It participates in carbohydrate degradation; glycolysis; pyruvate from D-glyceraldehyde 3-phosphate: step 3/5. Its function is as follows. Catalyzes the interconversion of 2-phosphoglycerate and 3-phosphoglycerate. This Mesoplasma florum (strain ATCC 33453 / NBRC 100688 / NCTC 11704 / L1) (Acholeplasma florum) protein is 2,3-bisphosphoglycerate-independent phosphoglycerate mutase.